An 85-amino-acid chain; its full sequence is Phycobilisome 9.7 kDa linker polypeptide, phycocyanin-associated, rod (85 aa).

A CpcD-like domain is found at 16–74 (NRVFVYEVEGLRQNEQTDNNRYQIRNSSTIEIQVPYSRMNEEDRRITRLGGRIVNIRPA).

It belongs to the phycobilisome linker protein family.

It localises to the cellular thylakoid membrane. In terms of biological role, rod linker protein, associated with phycocyanin. Linker polypeptides determine the state of aggregation and the location of the disk-shaped phycobiliprotein units within the phycobilisome and modulate their spectroscopic properties in order to mediate a directed and optimal energy transfer. The polypeptide is Phycobilisome 9.7 kDa linker polypeptide, phycocyanin-associated, rod (cpcD2) (Microchaete diplosiphon (Fremyella diplosiphon)).